Reading from the N-terminus, the 470-residue chain is Heparan-sulfate 6-O-sulfotransferase 3 (470 aa).

Topologically, residues 1–4 (MDER) are cytoplasmic. The helical; Signal-anchor for type II membrane protein transmembrane segment at 5-27 (FNKWLLTPVLTLLFVVIMYQYVS) threads the bilayer. The Lumenal segment spans residues 28–470 (PSCTSSCTNF…EDYNSQVVRW (443 aa)). The interval 36-121 (NFGEQLRSGE…EAPENGSLPR (86 aa)) is disordered. A compositionally biased stretch (acidic residues) spans 88-113 (PEDEDEDPGDPEEEEEEEEEEPDPEA). N-linked (GlcNAc...) asparagine glycosylation is found at Asn-116 and Asn-127. 151-159 (HIQKTGGTT) provides a ligand contact to 3'-phosphoadenylyl sulfate. Residues 181-182 (KK), Arg-198, Trp-203, and His-208 each bind substrate. His-208 (proton acceptor) is an active-site residue. Asn-230 is a glycosylation site (N-linked (GlcNAc...) asparagine). Arg-244 and Ser-252 together coordinate 3'-phosphoadenylyl sulfate. 2 residues coordinate substrate: His-256 and Trp-263. N-linked (GlcNAc...) asparagine glycosylation is found at Asn-323 and Asn-328. 376-378 (TQF) lines the 3'-phosphoadenylyl sulfate pocket. A glycan (N-linked (GlcNAc...) asparagine) is linked at Asn-379. 382 to 383 (RA) is a 3'-phosphoadenylyl sulfate binding site. The segment at 421–453 (TKQLEHQRDRQKRREERRLQREHRAHRWPKEDR) is disordered. Positions 422–439 (KQLEHQRDRQKRREERRL) are enriched in basic and acidic residues.

This sequence belongs to the sulfotransferase 6 family. As to expression, ubiquitously expressed.

The protein localises to the membrane. It catalyses the reaction alpha-D-glucosaminyl-[heparan sulfate](n) + 3'-phosphoadenylyl sulfate = 6-sulfo-alpha-D-glucosaminyl-[heparan sulfate](n) + adenosine 3',5'-bisphosphate + H(+). In terms of biological role, 6-O-sulfation enzyme which catalyzes the transfer of sulfate from 3'-phosphoadenosine 5'-phosphosulfate (PAPS) to position 6 of the N-sulfoglucosamine residue (GlcNS) of heparan sulfate. In Mus musculus (Mouse), this protein is Heparan-sulfate 6-O-sulfotransferase 3 (Hs6st3).